The following is a 494-amino-acid chain: Aspartyl/glutamyl-tRNA(Asn/Gln) amidotransferase subunit B (494 aa).

Belongs to the GatB/GatE family. GatB subfamily. In terms of assembly, heterotrimer of A, B and C subunits.

The catalysed reaction is L-glutamyl-tRNA(Gln) + L-glutamine + ATP + H2O = L-glutaminyl-tRNA(Gln) + L-glutamate + ADP + phosphate + H(+). It catalyses the reaction L-aspartyl-tRNA(Asn) + L-glutamine + ATP + H2O = L-asparaginyl-tRNA(Asn) + L-glutamate + ADP + phosphate + 2 H(+). Functionally, allows the formation of correctly charged Asn-tRNA(Asn) or Gln-tRNA(Gln) through the transamidation of misacylated Asp-tRNA(Asn) or Glu-tRNA(Gln) in organisms which lack either or both of asparaginyl-tRNA or glutaminyl-tRNA synthetases. The reaction takes place in the presence of glutamine and ATP through an activated phospho-Asp-tRNA(Asn) or phospho-Glu-tRNA(Gln). In Rhodopseudomonas palustris (strain ATCC BAA-98 / CGA009), this protein is Aspartyl/glutamyl-tRNA(Asn/Gln) amidotransferase subunit B.